The primary structure comprises 424 residues: Histidine--tRNA ligase (424 aa).

This sequence belongs to the class-II aminoacyl-tRNA synthetase family. As to quaternary structure, homodimer.

It is found in the cytoplasm. The catalysed reaction is tRNA(His) + L-histidine + ATP = L-histidyl-tRNA(His) + AMP + diphosphate + H(+). The sequence is that of Histidine--tRNA ligase from Shewanella frigidimarina (strain NCIMB 400).